Here is a 101-residue protein sequence, read N- to C-terminus: Protein S100-A4 (101 aa).

Ala-2 is subject to N-acetylalanine. Lys-7 bears the N6-acetyllysine mark. 2 consecutive EF-hand domains span residues Met-12 to Gly-47 and Thr-50 to Met-85. Ca(2+) is bound by residues Lys-28 and Glu-33. Lys-35 bears the N6-acetyllysine mark. Ca(2+) contacts are provided by Asp-63, Asn-65, Asp-67, Glu-69, and Glu-74.

The protein belongs to the S-100 family. In terms of assembly, homodimer. Interacts with PPFIBP1 in a calcium-dependent mode. Interacts with PGLYRP1; this complex acts as a chemoattractant that promotes lymphocyte movement. Interacts with MYH9; this interaction increases cell motility. Interacts with Annexin 2/ANXA2. Interacts with TP53; this interaction promotes TP53 degradation. Interacts with CCR5. Interacts with FCGR3A; this interaction inhibits PKC-dependent phosphorylation of FCGR3A. Ubiquitously expressed.

The protein localises to the secreted. The protein resides in the nucleus. Its subcellular location is the cytoplasm. Its function is as follows. Calcium-binding protein that plays a role in various cellular processes including motility, angiogenesis, cell differentiation, apoptosis, and autophagy. Increases cell motility and invasiveness by interacting with non-muscle myosin heavy chain (NMMHC) IIA/MYH9. Mechanistically, promotes filament depolymerization and increases the amount of soluble myosin-IIA, resulting in the formation of stable protrusions facilitating chemotaxis. Also modulates the pro-apoptotic function of TP53 by binding to its C-terminal transactivation domain within the nucleus and reducing its protein levels. Within the extracellular space, stimulates cytokine production including granulocyte colony-stimulating factor and CCL24 from T-lymphocytes. In addition, stimulates T-lymphocyte chemotaxis by acting as a chemoattractant complex with PGLYRP1 that promotes lymphocyte migration via CCR5 and CXCR3 receptors. The protein is Protein S100-A4 (S100A4) of Homo sapiens (Human).